The primary structure comprises 231 residues: Putative histone H1.9 (231 aa).

An H15 domain is found at 113–177 (QKPSTSKVIL…GSAGSFTLGK (65 aa)). Ser135 is subject to Phosphoserine. The interval 177–214 (KKQASKSKLKVKRQRQQRWRSGQRPFGQHRSLLGSKQG) is disordered. Residues 179 to 194 (QASKSKLKVKRQRQQR) are compositionally biased toward basic residues.

The protein belongs to the histone H1/H5 family. In terms of tissue distribution, expressed exclusively in the testis.

The protein resides in the nucleus. The protein localises to the chromosome. DNA-binding protein that may be implicated in chromatin remodeling and/or transcriptional regulation during spermiogenesis, the process of spermatid maturation into spermatozoa. The chain is Putative histone H1.9 from Homo sapiens (Human).